A 541-amino-acid polypeptide reads, in one-letter code: MDKENKMDILNNQIFLLLLITLIGMTIGKINIKNFSLDSSAIIFVGLFFGHFGYTLPKTFQTLGLVLFIYSIGLQAGPGFFFSLRQRGLKLSLGTVAIIGIGFLTTLATTYLFHFSAGTSAGIFTGALTSTPGLAVAVEIAGGQNAPAAYGVTYFFGIVGVIVFIQIIPKILNITVKDEEQALNKERDKTHKPLHFMHLELTNLNLVDRQVKHLNLKSISPVIITRLLRKNGTEPILVGGQTILQAGDHLRITGTKDDLEMMQMYLGTPVDQDIEFERVLSGEYITVSNKDICGMSLKQLNCHEVFNVQLSRISRNGIELPAGPNLRLHMGDTIHAVGSKQSLENIKKIFGNSIKDSYNFNILPIFTGLFLGFILGKIPLYIPFSGIFYLGTTGGVLIAGLFLSNIYKTGPLIWAIPSNANSFIREMGLVLFMATIGTQTGTSILATLRHEGLQLSLAGILVTTVPLISSVFICKHLLKLPFLSMLGVITGAMTSTPGLATMAKISKTPYATSSYATVYPVALISMIIYTKLLIFIVERFF.

Helical transmembrane passes span 10 to 32 (LNNQ…KINI), 39 to 57 (SSAI…YTLP), 62 to 84 (TLGL…FFSL), 91 to 113 (LSLG…TYLF), and 146 to 168 (APAA…IQII). RCK C-terminal domains are found at residues 183–260 (LNKE…DDLE) and 268–352 (TPVD…IFGN). The next 6 membrane-spanning stretches (helical) occupy residues 357–375 (SYNF…GFIL), 385–407 (SGIF…SNIY), 428–447 (GLVL…ILAT), 452–474 (GLQL…VFIC), 481–500 (PFLS…PGLA), and 515–537 (YATV…IFIV).

Belongs to the AAE transporter (TC 2.A.81) family.

The protein resides in the cell membrane. This is an uncharacterized protein from Desulfotalea psychrophila (strain LSv54 / DSM 12343).